The sequence spans 264 residues: 3-methyl-2-oxobutanoate hydroxymethyltransferase (264 aa).

Mg(2+) is bound by residues Asp45 and Asp84. Residues 45–46 (DS), Asp84, and Lys112 contribute to the 3-methyl-2-oxobutanoate site. Residue Glu114 coordinates Mg(2+). Glu181 functions as the Proton acceptor in the catalytic mechanism.

It belongs to the PanB family. In terms of assembly, homodecamer; pentamer of dimers. Mg(2+) is required as a cofactor.

It localises to the cytoplasm. The enzyme catalyses 3-methyl-2-oxobutanoate + (6R)-5,10-methylene-5,6,7,8-tetrahydrofolate + H2O = 2-dehydropantoate + (6S)-5,6,7,8-tetrahydrofolate. It participates in cofactor biosynthesis; (R)-pantothenate biosynthesis; (R)-pantoate from 3-methyl-2-oxobutanoate: step 1/2. In terms of biological role, catalyzes the reversible reaction in which hydroxymethyl group from 5,10-methylenetetrahydrofolate is transferred onto alpha-ketoisovalerate to form ketopantoate. The chain is 3-methyl-2-oxobutanoate hydroxymethyltransferase from Shewanella pealeana (strain ATCC 700345 / ANG-SQ1).